We begin with the raw amino-acid sequence, 265 residues long: Gamma-secretase subunit APH-1A (265 aa).

Topologically, residues 1-2 are lumenal; sequence MG. Residues 3-23 traverse the membrane as a helical segment; that stretch reads AAVFFGCTFVAFGPAFALFLI. Residues 24–31 lie on the Cytoplasmic side of the membrane; sequence TVAGDPLR. The chain crosses the membrane as a helical span at residues 32 to 52; it reads VIILVAGAFFWLVSLLLASVV. Topologically, residues 53–68 are lumenal; it reads WFILVHVTDRSDARLQ. A helical membrane pass occupies residues 69–89; sequence YGLLIFGAAVSVLLQEVFRFA. Residues 90 to 118 lie on the Cytoplasmic side of the membrane; sequence YYKLLKKADEGLASLSEDGRSPISIRQMA. A helical transmembrane segment spans residues 119–139; the sequence is YVSGLSFGIISGVFSVINILA. The Lumenal segment spans residues 140–158; sequence DALGPGVVGIHGDSPYYFL. The chain crosses the membrane as a helical span at residues 159–179; sequence TSAFLTAAIILLHTFWGVVFF. Residues 180 to 186 lie on the Cytoplasmic side of the membrane; that stretch reads DACERRR. Residues 187-207 traverse the membrane as a helical segment; sequence YWALGLVVGSHLLTSGLTFLN. The Lumenal segment spans residues 208–213; it reads PWYEAS. The chain crosses the membrane as a helical span at residues 214-234; it reads LLPIYAVTVSMGLWAFITAGG. At 235–265 the chain is on the cytoplasmic side; it reads SLRSIQRSLLCRRQEDSRVMVYSALRIPPED.

It belongs to the APH-1 family. As to quaternary structure, the functional gamma-secretase complex is composed of at least four polypeptides: a presenilin homodimer (PSEN1 or PSEN2), nicastrin (NCSTN), APH1 (APH1A or APH1B) and PSENEN/PEN2. As to expression, widely expressed. Expressed in leukocytes, lung, placenta, small intestine, liver, kidney, spleen thymus, skeletal muscle, heart and brain. Isoform 1 and isoform 2 are nearly expressed at the same level.

The protein resides in the endoplasmic reticulum membrane. Its subcellular location is the golgi apparatus. It localises to the golgi stack membrane. Its function is as follows. Non-catalytic subunit of the gamma-secretase complex, an endoprotease complex that catalyzes the intramembrane cleavage of integral membrane proteins such as Notch receptors and APP (amyloid-beta precursor protein). Required for normal gamma-secretase assembly. The gamma-secretase complex plays a role in Notch and Wnt signaling cascades and regulation of downstream processes via its role in processing key regulatory proteins, and by regulating cytosolic CTNNB1 levels. The chain is Gamma-secretase subunit APH-1A (APH1A) from Homo sapiens (Human).